The primary structure comprises 153 residues: Alpha-amylase inhibitor 0.28 (153 aa).

The N-terminal stretch at 1 to 30 (MWMKTVFWGLLVFMLVATTMAVEYGARSHN) is a signal peptide. Disulfide bonds link Cys37–Cys84, Cys51–Cys72, Cys59–Cys112, Cys73–Cys128, and Cys86–Cys143.

The protein belongs to the protease inhibitor I6 (cereal trypsin/alpha-amylase inhibitor) family. Monomer. The disulfide bonds are essential for the inhibitor activity. Endosperm.

It localises to the secreted. In terms of biological role, alpha-amylase inhibitor. The protein is Alpha-amylase inhibitor 0.28 (IMA1) of Triticum aestivum (Wheat).